We begin with the raw amino-acid sequence, 845 residues long: uncharacterized protein (845 aa).

Positions 224–241 (SNNIPTGIQDSSKYTVNG) are enriched in polar residues. 7 disordered regions span residues 224 to 244 (SNNI…GPTE), 324 to 346 (QGTE…ANNG), 383 to 434 (RTAN…EGSA), 456 to 485 (VKAS…ATLN), 519 to 619 (NMTL…PKNS), 674 to 701 (VVSR…DSSP), and 739 to 785 (RKST…ANKS). The span at 390–399 (PTKKSNRSEQ) shows a compositional bias: basic and acidic residues. Polar residues predominate over residues 400–422 (SKTVANTNVGSKNGTTPRSFAQK). Positions 534-546 (NSWRSKYLSEGKN) are enriched in basic and acidic residues. The span at 563–576 (SSLASPTKSSASPL) shows a compositional bias: low complexity. At Ser567 the chain carries Phosphoserine. Composition is skewed to basic and acidic residues over residues 579–588 (APKETPERLC) and 600–614 (ANLK…KSDI). 3 stretches are compositionally biased toward polar residues: residues 674-683 (VVSRTVTSPK), 691-701 (SKASYNQDSSP), and 743-760 (ADSL…TPKA).

The protein localises to the mitochondrion. This is an uncharacterized protein from Schizosaccharomyces pombe (strain 972 / ATCC 24843) (Fission yeast).